The sequence spans 414 residues: NADH-dependent flavin oxidoreductase iccE (414 aa).

FMN contacts are provided by residues 25–28 and glutamine 107; that span reads TAIA. 188–191 serves as a coordination point for substrate; the sequence is HASH. 347 to 348 is an FMN binding site; sequence AR.

Belongs to the NADH:flavin oxidoreductase/NADH oxidase family.

It catalyses the reaction 8-epi-ilicicolin H = ilicicolin H. It functions in the pathway mycotoxin biosynthesis. Functionally, NADH-dependent flavin oxidoreductase; part of the gene cluster that mediates the biosynthesis of ilicicolin H, a 4-hydroxy-2-pyridonealkaloid that has potent and broad antifungal activities by inhibiting the mitochondrial respiration chain. IccE acts as an epimerase and catalyzes the conversion of 8-epi-ilicicolin H into the final product ilicicolin H. The biosynthesis of ilicicolin H starts with formation of the tetramic acid by the hybrid PKS-NRPS synthetase iccA with the partnering trans-enoyl reductase iccB since iccA lacks a designated enoylreductase (ER) domain. The cytochrome P450 monooxygenase iccC then catalyzes the ring expansion of the tetramate to the acyclic 2-pyridone. The pericyclase iccD further converts the acyclic 2-pyridone into 8-epi-ilicicolin H. Finally, the epimerase iccE converts 8-epi-ilicicolin H into ilicicolin H via epimerization. IccA to iccE are sufficient for ilicicolin H biosynthesis and the roles of the remaining enzymes, iccF, iccG and iccH within the pathway have still to be determined. This Talaromyces variabilis (Penicillium variabile) protein is NADH-dependent flavin oxidoreductase iccE.